Consider the following 430-residue polypeptide: Ribosomal protein uS12 methylthiotransferase RimO (430 aa).

One can recognise an MTTase N-terminal domain in the interval 1–116 (MKIGIKVLGC…IAEAIEKATP (116 aa)). 6 residues coordinate [4Fe-4S] cluster: Cys-10, Cys-46, Cys-79, Cys-146, Cys-150, and Cys-153. The Radical SAM core domain maps to 132–362 (SCNNSFAYVK…LIFQSQIAYE (231 aa)). A TRAM domain is found at 365–430 (KRFVGKNLNV…DEYDLKGELI (66 aa)).

It belongs to the methylthiotransferase family. RimO subfamily. The cofactor is [4Fe-4S] cluster.

It localises to the cytoplasm. The catalysed reaction is L-aspartate(89)-[ribosomal protein uS12]-hydrogen + (sulfur carrier)-SH + AH2 + 2 S-adenosyl-L-methionine = 3-methylsulfanyl-L-aspartate(89)-[ribosomal protein uS12]-hydrogen + (sulfur carrier)-H + 5'-deoxyadenosine + L-methionine + A + S-adenosyl-L-homocysteine + 2 H(+). Functionally, catalyzes the methylthiolation of an aspartic acid residue of ribosomal protein uS12. The protein is Ribosomal protein uS12 methylthiotransferase RimO of Pseudothermotoga lettingae (strain ATCC BAA-301 / DSM 14385 / NBRC 107922 / TMO) (Thermotoga lettingae).